A 377-amino-acid polypeptide reads, in one-letter code: D-alanine--D-alanine ligase (377 aa).

The ATP-grasp domain occupies 137-346 (KELMTVNGIR…RSQQAEKLIQ (210 aa)). Residue 167-222 (SKQLGEVVFVKAANQGSSVGVSRVTNAEEYENALRDSFQYDEKLLVEKAVESPTEL) coordinates ATP. Aspartate 300, glutamate 313, and asparagine 315 together coordinate Mg(2+).

The protein belongs to the D-alanine--D-alanine ligase family. Requires Mg(2+) as cofactor. Mn(2+) serves as cofactor.

The protein resides in the cytoplasm. It catalyses the reaction 2 D-alanine + ATP = D-alanyl-D-alanine + ADP + phosphate + H(+). Its pathway is cell wall biogenesis; peptidoglycan biosynthesis. In terms of biological role, cell wall formation. This is D-alanine--D-alanine ligase from Oenococcus oeni (strain ATCC BAA-331 / PSU-1).